The following is a 274-amino-acid chain: Large ribosomal subunit protein uL2 (274 aa).

2 disordered regions span residues 28–54 (APHA…TRHI) and 224–274 (VAMN…RRRK). Residues 263–274 (KRTDKMIVRRRK) show a composition bias toward basic and acidic residues.

It belongs to the universal ribosomal protein uL2 family. Part of the 50S ribosomal subunit. Forms a bridge to the 30S subunit in the 70S ribosome.

Functionally, one of the primary rRNA binding proteins. Required for association of the 30S and 50S subunits to form the 70S ribosome, for tRNA binding and peptide bond formation. It has been suggested to have peptidyltransferase activity; this is somewhat controversial. Makes several contacts with the 16S rRNA in the 70S ribosome. The polypeptide is Large ribosomal subunit protein uL2 (Pseudomonas fluorescens (strain SBW25)).